Here is a 335-residue protein sequence, read N- to C-terminus: Fimbrial adhesin PapGIII (335 aa).

Residues 1–21 form the signal peptide; sequence MKKWLPAFLFLSLSGCNDALA.

The protein belongs to the adhesin PapG family.

The protein resides in the secreted. The protein localises to the fimbrium. Tip adhesin component of type P pili that binds preferentially to Gal-alpha(1-4)-Gal-containing glycolipids such as globoside. This tip is common in E.coli strains that cause human cystitis, but rare in pyelonephritic isolates. The sequence is that of Fimbrial adhesin PapGIII from Escherichia coli.